The chain runs to 153 residues: Lipoprotein signal peptidase (153 aa).

The next 3 membrane-spanning stretches (helical) occupy residues 7-27, 59-79, and 93-113; these read LIII…LNNY, NLIR…IFYM, and SIII…GSVI. Catalysis depends on residues aspartate 114 and aspartate 132. Residues 123–143 form a helical membrane-spanning segment; that stretch reads WHFPVFNFADISIFIGFLILI.

This sequence belongs to the peptidase A8 family.

It localises to the cell membrane. The enzyme catalyses Release of signal peptides from bacterial membrane prolipoproteins. Hydrolyzes -Xaa-Yaa-Zaa-|-(S,diacylglyceryl)Cys-, in which Xaa is hydrophobic (preferably Leu), and Yaa (Ala or Ser) and Zaa (Gly or Ala) have small, neutral side chains.. It participates in protein modification; lipoprotein biosynthesis (signal peptide cleavage). This protein specifically catalyzes the removal of signal peptides from prolipoproteins. The protein is Lipoprotein signal peptidase of Wigglesworthia glossinidia brevipalpis.